The following is a 735-amino-acid chain: Muskelin (735 aa).

Residue Ala-2 is modified to N-acetylalanine. One can recognise a LisH domain in the interval 172-204; sequence REQEAIRLCLKHFRQHNYTEAFESLQKKTKIAL. The region spanning 206 to 258 is the CTLH domain; it reads HPMLTDIHDKLVLKGDFDACEELIEKAVNDGLFNQYISQQEYKPRWSQIIPKS. 6 Kelch repeats span residues 284 to 330, 339 to 391, 408 to 458, 469 to 515, 526 to 578, and 597 to 651; these read TVYL…SCHK, QIYT…FDHQ, ILTC…SRIG, CLYV…TGFT, EIHV…SLQE, and VHYL…AQMD.

As to quaternary structure, homodimer; may form higher oligomers. Identified in the CTLH complex that contains GID4, RANBP9 and/or RANBP10, MKLN1, MAEA, RMND5A (or alternatively its paralog RMND5B), GID8, ARMC8, WDR26 and YPEL5. Within this complex, MAEA, RMND5A (or alternatively its paralog RMND5B), GID8, WDR26, and RANBP9 and/or RANBP10 form the catalytic core, while GID4, MKLN1, ARMC8 and YPEL5 have ancillary roles. Interacts with RANBP9. Part of a complex consisting of RANBP9, MKLN1 and GID8. Interacts with GABRA1. Interacts with the C-terminal tail of PTGER3.

Its subcellular location is the cytoplasm. It is found in the cytosol. The protein resides in the nucleus. It localises to the nucleoplasm. The protein localises to the cell projection. Its subcellular location is the ruffle. It is found in the cell cortex. The protein resides in the synapse. It localises to the postsynapse. Functionally, component of the CTLH E3 ubiquitin-protein ligase complex that selectively accepts ubiquitin from UBE2H and mediates ubiquitination and subsequent proteasomal degradation of the transcription factor HBP1. Required for internalization of the GABA receptor GABRA1 from the cell membrane via endosomes and subsequent GABRA1 degradation. Acts as a mediator of cell spreading and cytoskeletal responses to the extracellular matrix component THBS1. This Pongo abelii (Sumatran orangutan) protein is Muskelin (MKLN1).